Reading from the N-terminus, the 239-residue chain is DNA repair protein RecO (239 aa).

The protein belongs to the RecO family.

Functionally, involved in DNA repair and RecF pathway recombination. The polypeptide is DNA repair protein RecO (Aromatoleum aromaticum (strain DSM 19018 / LMG 30748 / EbN1) (Azoarcus sp. (strain EbN1))).